Reading from the N-terminus, the 111-residue chain is Ig kappa chain V-III region PC 7940 (111 aa).

Positions 1-23 (DIVLTQSPASLAVSLGQRATISC) are framework-1. C23 and C92 are joined by a disulfide. Residues 24–38 (RASKSVSAFGYSYMH) form a complementarity-determining-1 region. Residues 39 to 53 (WYQQKPGQPPKLLIY) form a framework-2 region. The segment at 54–60 (LASNLES) is complementarity-determining-2. The tract at residues 61-92 (GVPARFSGSGSGTDFTLNIHPVEEEDAVTYYC) is framework-3. The segment at 93 to 101 (QHSRELPPT) is complementarity-determining-3. The framework-4 stretch occupies residues 102–111 (FGGGTKLEIK).

The polypeptide is Ig kappa chain V-III region PC 7940 (Mus musculus (Mouse)).